Consider the following 211-residue polypeptide: Small ribosomal subunit protein uS5 (211 aa).

The tract at residues 1-41 (MPGRERRDGGRSADDNKQNDRNERRGGGRRDDRRNQQQDER) is disordered. The S5 DRBM domain maps to 44 to 107 (YIERVVTINR…EEARKNFFRV (64 aa)).

The protein belongs to the universal ribosomal protein uS5 family. Part of the 30S ribosomal subunit. Contacts proteins S4 and S8.

Its function is as follows. With S4 and S12 plays an important role in translational accuracy. Located at the back of the 30S subunit body where it stabilizes the conformation of the head with respect to the body. The chain is Small ribosomal subunit protein uS5 from Corynebacterium glutamicum (strain R).